We begin with the raw amino-acid sequence, 253 residues long: Sulfoacetaldehyde reductase (253 aa).

6-30 (FITGATSGFGRAAAHRFAAAGWSLV) is an NADP(+) binding site. Ser139 serves as a coordination point for substrate. Catalysis depends on Tyr152, which acts as the Proton acceptor.

The protein belongs to the short-chain dehydrogenases/reductases (SDR) family. As to quaternary structure, homodimer and heterotetramer.

It carries out the reaction 2-hydroxyethane-1-sulfonate + NADP(+) = sulfoacetaldehyde + NADPH + H(+). It participates in organosulfur degradation. Its function is as follows. Catalyzes the formation of isethionate from 2-sulfoacetaldehyde in the deaminative pathway of taurine. The enzyme is specific for NADPH; NADH is not a substrate. Responsible for most of the activity observed in taurine-grown cells. The sequence is that of Sulfoacetaldehyde reductase (isfD) from Chromohalobacter salexigens (strain ATCC BAA-138 / DSM 3043 / CIP 106854 / NCIMB 13768 / 1H11).